Consider the following 426-residue polypeptide: N-formyl-4-amino-5-aminomethyl-2-methylpyrimidine deformylase (426 aa).

Positions 1–31 (MDQQIYSLQKKVEEHKEELIQLAKTLISYQT) form a coiled coil. Histidine 89 lines the Zn(2+) pocket. Aspartate 91 is a catalytic residue. Residue aspartate 122 coordinates Zn(2+). The active-site Proton acceptor is the glutamate 156. Residues glutamate 157, aspartate 180, and histidine 394 each coordinate Zn(2+).

This sequence belongs to the peptidase M20A family. Zn(2+) is required as a cofactor. The cofactor is Co(2+).

It carries out the reaction N-formyl-4-amino-5-aminomethyl-2-methylpyrimidine + H2O = 4-amino-5-aminomethyl-2-methylpyrimidine + formate. The protein operates within cofactor biosynthesis; thiamine diphosphate biosynthesis. Its function is as follows. Catalyzes the deformylation of the formylaminopyrimidine N-formyl-4-amino-5-aminomethyl-2-methylpyrimidine (FAMP) to give the corresponding aminopyrimidine. This chain is N-formyl-4-amino-5-aminomethyl-2-methylpyrimidine deformylase, found in Bacillus subtilis (strain 168).